Reading from the N-terminus, the 851-residue chain is Protein NUD1 (851 aa).

2 disordered regions span residues 1-31 (MDMD…NAHS) and 216-352 (LVGS…KAPS). A compositionally biased stretch (polar residues) spans 8 to 21 (AELSSQLENLTINS). 2 stretches are compositionally biased toward low complexity: residues 223-246 (NSNN…INNK) and 260-278 (SNSF…QTQS). Polar residues predominate over residues 291-304 (NTISPGQLGYQFNH). The span at 320–333 (SSSHSLDNTSSNQS) shows a compositional bias: low complexity. Lysine 357 is covalently cross-linked (Glycyl lysine isopeptide (Lys-Gly) (interchain with G-Cter in ubiquitin)). Phosphothreonine is present on residues threonine 388 and threonine 392. Phosphoserine occurs at positions 417 and 419. LRR repeat units follow at residues 544–566 (DLEC…SLCH), 567–588 (HLQE…GSSR), 589–609 (MKKL…EQLI), 621–642 (TVEV…NCLP), and 643–664 (RLKV…SKME).

Interacts directly with MPC54, CNM67, SPO21/MPC70, ADY3 and ADY4. Probable component of a spindle pole boby (SPB) complex composed of ADY3, SSP1, DON1, MPC54, SPO21/MPC70, NUD1 and CNM67. Phosphorylated from S/G2 phase until the end of mitosis.

It localises to the cytoplasm. Its subcellular location is the cytoskeleton. It is found in the microtubule organizing center. The protein localises to the spindle pole body. The protein resides in the nucleus envelope. Involved in astral microtubule organization by binding SCP72 to the outer plaque in a cell-cycle dependent manner. Required for the mitotic exit by facilitating the binding of TEMP1 to CDC15. Also involved in the pathway that organizes the shaping and sizing of the prospore membrane (PSM) during sporulation. The polypeptide is Protein NUD1 (NUD1) (Saccharomyces cerevisiae (strain ATCC 204508 / S288c) (Baker's yeast)).